A 179-amino-acid polypeptide reads, in one-letter code: Large ribosomal subunit protein uL5 (179 aa).

Belongs to the universal ribosomal protein uL5 family. As to quaternary structure, part of the 50S ribosomal subunit; part of the 5S rRNA/L5/L18/L25 subcomplex. Contacts the 5S rRNA and the P site tRNA. Forms a bridge to the 30S subunit in the 70S ribosome.

In terms of biological role, this is one of the proteins that bind and probably mediate the attachment of the 5S RNA into the large ribosomal subunit, where it forms part of the central protuberance. In the 70S ribosome it contacts protein S13 of the 30S subunit (bridge B1b), connecting the 2 subunits; this bridge is implicated in subunit movement. Contacts the P site tRNA; the 5S rRNA and some of its associated proteins might help stabilize positioning of ribosome-bound tRNAs. The protein is Large ribosomal subunit protein uL5 of Acidovorax ebreus (strain TPSY) (Diaphorobacter sp. (strain TPSY)).